Consider the following 208-residue polypeptide: Ribosomal RNA large subunit methyltransferase E (208 aa).

The S-adenosyl-L-methionine site is built by Gly-61, Trp-63, Asp-81, Asp-97, and Asp-122. Lys-162 acts as the Proton acceptor in catalysis.

Belongs to the class I-like SAM-binding methyltransferase superfamily. RNA methyltransferase RlmE family.

It is found in the cytoplasm. The catalysed reaction is uridine(2552) in 23S rRNA + S-adenosyl-L-methionine = 2'-O-methyluridine(2552) in 23S rRNA + S-adenosyl-L-homocysteine + H(+). Specifically methylates the uridine in position 2552 of 23S rRNA at the 2'-O position of the ribose in the fully assembled 50S ribosomal subunit. The polypeptide is Ribosomal RNA large subunit methyltransferase E (Pseudomonas entomophila (strain L48)).